Here is a 271-residue protein sequence, read N- to C-terminus: Phosphate import ATP-binding protein PstB 1 (271 aa).

In terms of domain architecture, ABC transporter spans 25–266; it reads LTVEHLNLYY…PTQRRTEDYI (242 aa). 57 to 64 contributes to the ATP binding site; sequence GPSGCGKS.

The protein belongs to the ABC transporter superfamily. Phosphate importer (TC 3.A.1.7) family. The complex is composed of two ATP-binding proteins (PstB), two transmembrane proteins (PstC and PstA) and a solute-binding protein (PstS).

It localises to the cell inner membrane. It carries out the reaction phosphate(out) + ATP + H2O = ADP + 2 phosphate(in) + H(+). In terms of biological role, part of the ABC transporter complex PstSACB involved in phosphate import. Responsible for energy coupling to the transport system. The polypeptide is Phosphate import ATP-binding protein PstB 1 (Pectobacterium atrosepticum (strain SCRI 1043 / ATCC BAA-672) (Erwinia carotovora subsp. atroseptica)).